Consider the following 264-residue polypeptide: Probable pectate lyase D (264 aa).

An N-terminal signal peptide occupies residues 1 to 17; it reads MFFKQLAVLSFATSALA. N-linked (GlcNAc...) asparagine glycosylation occurs at Asn60. The segment at 234–264 is disordered; sequence YEGTDNNDEEPQEISTGPSNACQYTDPLPSC. Residues 235–245 are compositionally biased toward acidic residues; sequence EGTDNNDEEPQ. The span at 246 to 256 shows a compositional bias: polar residues; it reads EISTGPSNACQ.

It belongs to the polysaccharide lyase 3 family. Ca(2+) serves as cofactor.

Its subcellular location is the secreted. The catalysed reaction is Eliminative cleavage of (1-&gt;4)-alpha-D-galacturonan to give oligosaccharides with 4-deoxy-alpha-D-galact-4-enuronosyl groups at their non-reducing ends.. In terms of biological role, pectinolytic enzyme consist of four classes of enzymes: pectin lyase, polygalacturonase, pectin methylesterase and rhamnogalacturonase. Among pectinolytic enzymes, pectin lyase is the most important in depolymerization of pectin, since it cleaves internal glycosidic bonds of highly methylated pectins. Favors pectate, the anion, over pectin, the methyl ester. This is Probable pectate lyase D (plyD) from Emericella nidulans (strain FGSC A4 / ATCC 38163 / CBS 112.46 / NRRL 194 / M139) (Aspergillus nidulans).